Reading from the N-terminus, the 261-residue chain is Putative [LysW]-aminoadipate/[LysW]-glutamate kinase (261 aa).

Residues 35–36 (GG), R62, and N162 each bind substrate.

It belongs to the acetylglutamate kinase family. LysZ subfamily.

It localises to the cytoplasm. It catalyses the reaction [amino-group carrier protein]-C-terminal-N-(1,4-dicarboxybutan-1-yl)-L-glutamine + ATP = [amino-group carrier protein]-C-terminal-N-(1-carboxy-5-phosphooxy-5-oxopentan-1-yl)-L-glutamine + ADP. The enzyme catalyses [amino-group carrier protein]-C-terminal-gamma-(L-glutamyl)-L-glutamate + ATP = [amino-group carrier protein]-C-terminal-gamma-(5-phospho-L-glutamyl)-L-glutamate + ADP. Its pathway is amino-acid biosynthesis; L-lysine biosynthesis via AAA pathway; L-lysine from L-alpha-aminoadipate (Thermus route): step 2/5. The protein operates within amino-acid biosynthesis; L-arginine biosynthesis. Involved in both the arginine and lysine biosynthetic pathways. Phosphorylates the LysW-bound precursors glutamate (for arginine biosynthesis), respectively alpha-aminoadipate (for lysine biosynthesis). The polypeptide is Putative [LysW]-aminoadipate/[LysW]-glutamate kinase (Pyrobaculum calidifontis (strain DSM 21063 / JCM 11548 / VA1)).